A 997-amino-acid chain; its full sequence is Glutamate [NMDA] receptor subunit 1 (997 aa).

The signal sequence occupies residues 1–26 (MAVAGFVFCWPLLGLTIVLLVAPIDA). The Extracellular segment spans residues 27–573 (AQRHTASDNP…TLVSFLQPFS (547 aa)). Residues N258, N314, N345, N397, N454, N481, and N501 are each glycosylated (N-linked (GlcNAc...) asparagine). Glycine-binding positions include 530 to 532 (PLT) and R537. A helical membrane pass occupies residues 574–594 (NTLWILVMVSVHVVALVLYLL). Residues 595–651 (DRFSPFGRFKLSHSDSNEEKALNLSSAVWFAWGVLLNSGIGEGTPRSFSARVLGMVW) lie on the Cytoplasmic side of the membrane. Residues 652–672 (AGFAMIIVASYTANLAAFLVL) form a helical membrane-spanning segment. At 673 to 831 (ERPKTKLSGI…KTPNTLGLKN (159 aa)) the chain is on the extracellular side. A glycan (N-linked (GlcNAc...) asparagine) is linked at N693. Glycine is bound by residues S703 and D747. The helical transmembrane segment at 832–852 (MAGVFILVGVGIAGGVGLIII) threads the bilayer. Topologically, residues 853-997 (EVIYKKHQVK…YTSDVSHLVV (145 aa)) are cytoplasmic. The segment at 970–997 (LGKTRPQQSVLPPRYSPGYTSDVSHLVV) is disordered. A compositionally biased stretch (polar residues) spans 987 to 997 (GYTSDVSHLVV).

The protein belongs to the glutamate-gated ion channel (TC 1.A.10.1) family. Forms a heteromeric NMDA channel with Nmdar2.

It is found in the cell membrane. Its subcellular location is the postsynaptic cell membrane. The protein localises to the postsynaptic density. Its function is as follows. NMDA receptor subtype of glutamate-gated ion channels with high calcium permeability and voltage-dependent sensitivity to magnesium. Mediated by glycine. This protein plays a key role in synaptic plasticity, synaptogenesis, excitotoxicity, memory acquisition and learning. It mediates neuronal functions in glutamate neurotransmission. Is involved in the cell surface targeting of NMDA receptors. Plays a role in associative learning and in long-term memory consolidation. The protein is Glutamate [NMDA] receptor subunit 1 of Drosophila yakuba (Fruit fly).